Consider the following 290-residue polypeptide: Light-independent protochlorophyllide reductase iron-sulfur ATP-binding protein (290 aa).

ATP contacts are provided by residues 10–15 (GIGKST) and lysine 39. Residue serine 14 coordinates Mg(2+). Positions 95 and 129 each coordinate [4Fe-4S] cluster. 180 to 181 (NR) provides a ligand contact to ATP.

Belongs to the NifH/BchL/ChlL family. As to quaternary structure, homodimer. Protochlorophyllide reductase is composed of three subunits; ChlL, ChlN and ChlB. It depends on [4Fe-4S] cluster as a cofactor.

The protein resides in the plastid. The protein localises to the chloroplast. It catalyses the reaction chlorophyllide a + oxidized 2[4Fe-4S]-[ferredoxin] + 2 ADP + 2 phosphate = protochlorophyllide a + reduced 2[4Fe-4S]-[ferredoxin] + 2 ATP + 2 H2O. It participates in porphyrin-containing compound metabolism; chlorophyll biosynthesis (light-independent). Its function is as follows. Component of the dark-operative protochlorophyllide reductase (DPOR) that uses Mg-ATP and reduced ferredoxin to reduce ring D of protochlorophyllide (Pchlide) to form chlorophyllide a (Chlide). This reaction is light-independent. The L component serves as a unique electron donor to the NB-component of the complex, and binds Mg-ATP. The protein is Light-independent protochlorophyllide reductase iron-sulfur ATP-binding protein of Angiopteris evecta (Mule's foot fern).